A 305-amino-acid polypeptide reads, in one-letter code: Oxygen-dependent coproporphyrinogen-III oxidase (305 aa).

S98 provides a ligand contact to substrate. Residues H102 and H112 each coordinate a divalent metal cation. H112 acts as the Proton donor in catalysis. 114–116 (NVR) is a binding site for substrate. Positions 151 and 181 each coordinate a divalent metal cation. The interval 246–281 (YVEFNLVYDRGTLFGLQSGGRTESILMSMPPLARWE) is important for dimerization. Substrate is bound at residue 264–266 (GGR).

This sequence belongs to the aerobic coproporphyrinogen-III oxidase family. In terms of assembly, homodimer. A divalent metal cation is required as a cofactor.

Its subcellular location is the cytoplasm. The enzyme catalyses coproporphyrinogen III + O2 + 2 H(+) = protoporphyrinogen IX + 2 CO2 + 2 H2O. Its pathway is porphyrin-containing compound metabolism; protoporphyrin-IX biosynthesis; protoporphyrinogen-IX from coproporphyrinogen-III (O2 route): step 1/1. Involved in the heme biosynthesis. Catalyzes the aerobic oxidative decarboxylation of propionate groups of rings A and B of coproporphyrinogen-III to yield the vinyl groups in protoporphyrinogen-IX. In Vibrio campbellii (strain ATCC BAA-1116), this protein is Oxygen-dependent coproporphyrinogen-III oxidase.